The primary structure comprises 196 residues: Large ribosomal subunit protein eL15 (196 aa).

Residues 153–196 (DPSSRGRATRGKTSAGRKGRGMATRGKGTEKTRPSIRAYKSRGK) form a disordered region. Over residues 159-172 (RATRGKTSAGRKGR) the composition is skewed to basic residues.

It belongs to the eukaryotic ribosomal protein eL15 family.

This Methanosarcina acetivorans (strain ATCC 35395 / DSM 2834 / JCM 12185 / C2A) protein is Large ribosomal subunit protein eL15.